A 406-amino-acid chain; its full sequence is Putative nickel insertion protein (406 aa).

The protein belongs to the LarC family.

The protein is Putative nickel insertion protein of Methanosphaera stadtmanae (strain ATCC 43021 / DSM 3091 / JCM 11832 / MCB-3).